The sequence spans 286 residues: 4-hydroxybenzoate octaprenyltransferase (286 aa).

The next 7 helical transmembrane spans lie at 22 to 42 (IGTL…EKAM), 45 to 65 (LSVL…GCVI), 98 to 118 (LFIV…LYTI), 143 to 163 (FFLG…TIEA), 213 to 233 (IIAL…YLSQ), 238 to 255 (YFIV…QCRL), and 266 to 286 (NAFL…LFGI).

The protein belongs to the UbiA prenyltransferase family. The cofactor is Mg(2+).

Its subcellular location is the cell inner membrane. It catalyses the reaction all-trans-octaprenyl diphosphate + 4-hydroxybenzoate = 4-hydroxy-3-(all-trans-octaprenyl)benzoate + diphosphate. It functions in the pathway cofactor biosynthesis; ubiquinone biosynthesis. Its function is as follows. Catalyzes the prenylation of para-hydroxybenzoate (PHB) with an all-trans polyprenyl group. Mediates the second step in the final reaction sequence of ubiquinone-8 (UQ-8) biosynthesis, which is the condensation of the polyisoprenoid side chain with PHB, generating the first membrane-bound Q intermediate 3-octaprenyl-4-hydroxybenzoate. This Histophilus somni (strain 2336) (Haemophilus somnus) protein is 4-hydroxybenzoate octaprenyltransferase.